The following is a 538-amino-acid chain: Pyruvate kinase (538 aa).

S45 bears the Phosphoserine mark. R72 is a substrate binding site. 4 residues coordinate K(+): N74, S76, D107, and T108. Position 74–77 (74–77) interacts with ATP; the sequence is NFSH. ATP contacts are provided by R114 and K200. A Mg(2+)-binding site is contributed by E265. Substrate is bound by residues G288, D289, and T321. D289 provides a ligand contact to Mg(2+).

Belongs to the pyruvate kinase family. As to quaternary structure, homotetramer. Mg(2+) serves as cofactor. The cofactor is K(+).

The catalysed reaction is pyruvate + ATP = phosphoenolpyruvate + ADP + H(+). It functions in the pathway carbohydrate degradation; glycolysis; pyruvate from D-glyceraldehyde 3-phosphate: step 5/5. This Hypocrea jecorina (Trichoderma reesei) protein is Pyruvate kinase (pki1).